The chain runs to 460 residues: CWF19-like protein 2 homolog (460 aa).

3 disordered regions span residues 38–78 (GKTF…EDEK), 103–175 (KLES…TGTA), and 193–227 (RRHD…ESIK). The span at 54 to 68 (GSQQVRNDVMKSSDS) shows a compositional bias: polar residues. The stretch at 84–106 (KILKAEMKGDTDLVKKLKRKLES) forms a coiled coil. 3 stretches are compositionally biased toward basic and acidic residues: residues 113 to 131 (EPPK…DREG), 139 to 172 (RRSD…EEKT), and 205 to 227 (EMQK…ESIK). A coiled-coil region spans residues 210–231 (KKKSDEKDKKRKEKESIKEHKR).

The protein belongs to the CWF19 family.

This Caenorhabditis elegans protein is CWF19-like protein 2 homolog.